Here is a 97-residue protein sequence, read N- to C-terminus: MQSSTALLFLLLTVTSFTSQVLAHPGSIPTSCCFIMTSKKIPNTLLKSYKRITNNRCTLKAIVFKTRLGKEICADPKKKWVQDATKHLDQKLQTPKP.

An N-terminal signal peptide occupies residues 1–23 (MQSSTALLFLLLTVTSFTSQVLA). 2 cysteine pairs are disulfide-bonded: Cys32/Cys57 and Cys33/Cys73. An O-linked (GalNAc...) threonine glycan is attached at Thr94.

It belongs to the intercrine beta (chemokine CC) family. In terms of tissue distribution, expressed constitutively in the thymus. Expression inducible in the lung (type I alveolar epithelial cells), intestine, heart, spleen, kidney.

Its subcellular location is the secreted. Its function is as follows. In response to the presence of allergens, this protein directly promotes the accumulation of eosinophils (a prominent feature of allergic inflammatory reactions), but not lymphocytes, macrophages or neutrophils. Binds to CCR3. The chain is Eotaxin (Ccl11) from Mus musculus (Mouse).